We begin with the raw amino-acid sequence, 298 residues long: MGLAAPRKRTKISHDPNNTNWARSTSGFGHKILSSQGWTPGSFLGARDAAHADMFTAASAGHIRVVVKDDTLGLGARAGRDPNEPTGLDAFKGLLGRLNGKSDAELAADQRKADDIKLARYAAFKWQAVRFVSGGLLAQEKLERLPERESVQQSRAAVETSDSNRNSENDASKVSKKKKKKTSSDSSSDEQSSRSEKRREKKEKKDKKEKKEKKDKKDKKRKRAEEDNDASQKSASETPAPEKESTGLESDSTSVSVVKASRERRPLGRQIVRGRHIAQKKRALMDDKSLNEIFMVKA.

Over residues 1–11 (MGLAAPRKRTK) the composition is skewed to basic residues. Positions 1-23 (MGLAAPRKRTKISHDPNNTNWAR) are disordered. Positions 25 to 79 (TSGFGHKILSSQGWTPGSFLGARDAAHADMFTAASAGHIRVVVKDDTLGLGARAG) constitute a G-patch domain. The tract at residues 145 to 274 (LPERESVQQS…RPLGRQIVRG (130 aa)) is disordered. The span at 151–164 (VQQSRAAVETSDSN) shows a compositional bias: polar residues. Over residues 199–222 (REKKEKKDKKEKKEKKDKKDKKRK) the composition is skewed to basic residues. Positions 247-256 (GLESDSTSVS) are enriched in polar residues.

It belongs to the PINX1 family.

The protein resides in the nucleus. Its subcellular location is the nucleolus. In terms of biological role, involved in rRNA-processing at A0, A1 and A2 sites and negatively regulates telomerase. The sequence is that of Protein pxr1 (pxr1) from Aspergillus terreus (strain NIH 2624 / FGSC A1156).